We begin with the raw amino-acid sequence, 441 residues long: Ribosomal protein uS12 methylthiotransferase RimO (441 aa).

Residues 8-118 enclose the MTTase N-terminal domain; that stretch reads PKIGFVSLGC…VLQHVHHYVP (111 aa). Positions 17, 53, 82, 150, 154, and 157 each coordinate [4Fe-4S] cluster. Residues 136–373 form the Radical SAM core domain; that stretch reads LTPRHYAYLK…MQLQQQISAE (238 aa). In terms of domain architecture, TRAM spans 376–441; that stretch reads QEKVGREILV…DEYDLWGSRV (66 aa).

This sequence belongs to the methylthiotransferase family. RimO subfamily. Requires [4Fe-4S] cluster as cofactor.

The protein localises to the cytoplasm. It carries out the reaction L-aspartate(89)-[ribosomal protein uS12]-hydrogen + (sulfur carrier)-SH + AH2 + 2 S-adenosyl-L-methionine = 3-methylsulfanyl-L-aspartate(89)-[ribosomal protein uS12]-hydrogen + (sulfur carrier)-H + 5'-deoxyadenosine + L-methionine + A + S-adenosyl-L-homocysteine + 2 H(+). In terms of biological role, catalyzes the methylthiolation of an aspartic acid residue of ribosomal protein uS12. This Salmonella arizonae (strain ATCC BAA-731 / CDC346-86 / RSK2980) protein is Ribosomal protein uS12 methylthiotransferase RimO.